A 404-amino-acid chain; its full sequence is UPF0261 protein CTC_01794 (404 aa).

Belongs to the UPF0261 family.

This is UPF0261 protein CTC_01794 from Clostridium tetani (strain Massachusetts / E88).